Consider the following 381-residue polypeptide: Subtilisin E (381 aa).

A signal peptide spans 1–29 (MRSKKLWISLLFALTLIFTMAFSNMSAQA). Positions 30–106 (AGKSSTEKKY…VEEDHIAHEY (77 aa)) are excised as a propeptide. One can recognise an Inhibitor I9 domain in the interval 38-103 (KYIVGFKQTM…VAYVEEDHIA (66 aa)). Glutamine 108 contacts Ca(2+). In terms of domain architecture, Peptidase S8 spans 111 to 380 (PYGISQIKAP…KGLINVQAAA (270 aa)). Aspartate 138 acts as the Charge relay system in catalysis. Aspartate 147 lines the Ca(2+) pocket. The active-site Charge relay system is the histidine 170. Residues leucine 181, asparagine 183, isoleucine 185, valine 187, alanine 275, tyrosine 277, threonine 280, and aspartate 303 each coordinate Ca(2+). The active-site Charge relay system is serine 327.

The protein belongs to the peptidase S8 family. Requires Ca(2+) as cofactor.

The protein localises to the secreted. The catalysed reaction is Hydrolysis of proteins with broad specificity for peptide bonds, and a preference for a large uncharged residue in P1. Hydrolyzes peptide amides.. Its activity is regulated as follows. Inhibited by PMSF (phenylmethylsulphonyl fluoride) and 3,4-dichloroisocoumarin but not by EDTA (shown for strain RT-5). Its function is as follows. An extracellular alkaline serine protease, it catalyzes the hydrolysis of proteins and peptide amides. The sequence is that of Subtilisin E from Bacillus subtilis (strain 168).